The primary structure comprises 379 residues: Homoserine O-succinyltransferase (379 aa).

The 310-residue stretch at 48-357 folds into the AB hydrolase-1 domain; that stretch reads NAVLICHALS…SAHGHDAFLM (310 aa). Ser154 functions as the Nucleophile in the catalytic mechanism. Arg224 is a binding site for substrate. Residues Asp319 and His352 contribute to the active site. Substrate is bound at residue Asp353.

It belongs to the AB hydrolase superfamily. MetX family. As to quaternary structure, homodimer.

It is found in the cytoplasm. It catalyses the reaction L-homoserine + succinyl-CoA = O-succinyl-L-homoserine + CoA. Its pathway is amino-acid biosynthesis; L-methionine biosynthesis via de novo pathway; O-succinyl-L-homoserine from L-homoserine: step 1/1. Functionally, transfers a succinyl group from succinyl-CoA to L-homoserine, forming succinyl-L-homoserine. In Neisseria meningitidis serogroup B (strain ATCC BAA-335 / MC58), this protein is Homoserine O-succinyltransferase.